The primary structure comprises 106 residues: MSDSVLVYSTDVGRIKEEKASVVRPKGDGVVRIQKQTSGRKGAGVSVITGLDLSDEELKKLAAELKKRCGCGGAVKNGIIEIQGEKRDLLKQLLEQKGFKVKLSGG.

This sequence belongs to the SUI1 family.

This is an uncharacterized protein from Haemophilus influenzae (strain ATCC 51907 / DSM 11121 / KW20 / Rd).